Here is a 374-residue protein sequence, read N- to C-terminus: Tetraacyldisaccharide 4'-kinase (374 aa).

Thr-66–Thr-73 serves as a coordination point for ATP.

The protein belongs to the LpxK family.

The catalysed reaction is a lipid A disaccharide + ATP = a lipid IVA + ADP + H(+). Its pathway is glycolipid biosynthesis; lipid IV(A) biosynthesis; lipid IV(A) from (3R)-3-hydroxytetradecanoyl-[acyl-carrier-protein] and UDP-N-acetyl-alpha-D-glucosamine: step 6/6. Transfers the gamma-phosphate of ATP to the 4'-position of a tetraacyldisaccharide 1-phosphate intermediate (termed DS-1-P) to form tetraacyldisaccharide 1,4'-bis-phosphate (lipid IVA). This chain is Tetraacyldisaccharide 4'-kinase, found in Syntrophus aciditrophicus (strain SB).